The following is a 196-amino-acid chain: dITP/XTP pyrophosphatase (196 aa).

Substrate is bound at residue 10 to 15 (TTNPHK). Asp-68 functions as the Proton acceptor in the catalytic mechanism. Asp-68 provides a ligand contact to Mg(2+). Residues Ser-69, 148–151 (FGYD), and 175–176 (HR) contribute to the substrate site.

Belongs to the HAM1 NTPase family. In terms of assembly, homodimer. It depends on Mg(2+) as a cofactor.

The catalysed reaction is XTP + H2O = XMP + diphosphate + H(+). It carries out the reaction dITP + H2O = dIMP + diphosphate + H(+). It catalyses the reaction ITP + H2O = IMP + diphosphate + H(+). Pyrophosphatase that catalyzes the hydrolysis of nucleoside triphosphates to their monophosphate derivatives, with a high preference for the non-canonical purine nucleotides XTP (xanthosine triphosphate), dITP (deoxyinosine triphosphate) and ITP. Seems to function as a house-cleaning enzyme that removes non-canonical purine nucleotides from the nucleotide pool, thus preventing their incorporation into DNA/RNA and avoiding chromosomal lesions. This is dITP/XTP pyrophosphatase from Thermotoga maritima (strain ATCC 43589 / DSM 3109 / JCM 10099 / NBRC 100826 / MSB8).